The primary structure comprises 216 residues: Histone doublet H4-H3 (216 aa).

Basic residues predominate over residues Met-1–Gln-12. Positions Met-1–Gly-23 are disordered.

The protein resides in the host nucleus. The protein localises to the host cytoplasm. Its subcellular location is the virion. Functionally, histone-like protein that is recruited to viral factories during viral replication and participates in viral DNA packaging and virion production probably by forming unstable nucleosome-like particles. May compact the viral DNA. In Melbournevirus (MelV), this protein is Histone doublet H4-H3.